The primary structure comprises 615 residues: Pre-hexon-linking protein IIIa (615 aa).

The tract at residues 1–92 (MDPGLKPSSS…DLLIRVHKYN (92 aa)) is peripentonal hexon-tethering domain. Residues 124 to 238 (SNQVILNDFL…FTNENTFTPD (115 aa)) are binding to hexon-linking protein. S212 is subject to Phosphoserine; by host. T262 carries the phosphothreonine; by host modification. Over residues 400-409 (EREALEEAGP) the composition is skewed to basic and acidic residues. 2 disordered regions span residues 400–473 (EREA…SVDS) and 528–615 (GERI…NGLK). Low complexity-rich tracts occupy residues 419–430 (PSSSPQSSKIQS) and 451–460 (SVRSAPPSVS). S451 carries the post-translational modification Phosphoserine; by host. A compositionally biased stretch (basic and acidic residues) spans 539-548 (RAEIERRRIA). Residues 557–570 (PSLSSESSAPSLSS) are compositionally biased toward low complexity. A propeptide spanning residues 602-615 (GNPFDYLRPRNGLK) is cleaved from the precursor.

It belongs to the adenoviridae hexon-linking protein IIIa family. As to quaternary structure, interacts with hexon proteins; this interaction tethers the peripentonal hexons to hexons situated in the facet. Interacts with the penton protein (via N-terminus). Interacts with packaging protein 3; this interaction is required to promote correct genome packaging. Post-translationally, cleaved near the C-terminus by the viral protease during virion maturation to form the mature protein.

The protein resides in the virion. It is found in the host nucleus. Functionally, structural component of the virion that acts as a cement protein on the capsid exterior which mediates the interactions between the hexons, including the peripentonal hexons, and reaches all the way to the penton vertices. Two hexon linking proteins IIIa, one from each facet, stabilize the unique edge interface between a pair of facets. As the virus enters the host cell, hexon linking proteins IIIa are shed concomitant with virion acidification in the endosome. During virus assembly, seems to play a role in the serotype specificity of the packaging of viral DNA via its interaction with packaging protein 3. The polypeptide is Pre-hexon-linking protein IIIa (Snake adenovirus serotype 1 (SnAdV-1)).